A 278-amino-acid chain; its full sequence is UPF0761 membrane protein CBU_1578 (278 aa).

7 helical membrane passes run 38–58 (LLAL…VPAF), 68–88 (LIWE…LSQL), 92–112 (VTGL…LLMY), 134–154 (FLIY…VMLL), 177–197 (LLFV…NWVL), 207–227 (AVIG…AFTV), and 244–264 (VIPI…LGAV).

It belongs to the UPF0761 family.

Its subcellular location is the cell inner membrane. This chain is UPF0761 membrane protein CBU_1578, found in Coxiella burnetii (strain RSA 493 / Nine Mile phase I).